The sequence spans 225 residues: Proteasome activator 28 (225 aa).

This sequence belongs to the PA28 family. Homoheptamer. The homoheptamer associates with the 20S proteasome.

The protein resides in the nucleus. Its function is as follows. Subunit of the 11S REG (also called PA28) proteasome regulator, a doughnut-shaped homoheptamer which associates with the proteasome. 11S REG-gamma activates preferentially the trypsin-like catalytic subunit of the proteasome. May also be involved in cell cycle regulation. The protein is Proteasome activator 28 (psmE3) of Dictyostelium discoideum (Social amoeba).